The following is a 785-amino-acid chain: B-cell scaffold protein with ankyrin repeats (785 aa).

The tract at residues 1 to 154 is interaction with ITPR2; that stretch reads MLPAAPGKGL…DYISVIQSII (154 aa). The TIR domain maps to 25–153; it reads NTKDIIMIYE…EDYISVIQSI (129 aa). In terms of domain architecture, DBB spans 200 to 327; the sequence is VLPTEIPCEN…EIPYYEFQSL (128 aa). ANK repeat units follow at residues 342-371 and 378-408; these read ELPT…ATWA and EGSD…EIDI. 4 disordered regions span residues 433-480, 493-514, 538-578, and 606-625; these read PAFH…SESS, GADP…LPPP, QMER…EDPY, and FIIN…PPKE. Over residues 553–568 the composition is skewed to basic and acidic residues; the sequence is ETGDEPKGEKEKKEEE. The segment covering 569–578 has biased composition (acidic residues); the sequence is KEQEEEEDPY. A compositionally biased stretch (pro residues) spans 611 to 621; sequence PPAPTPRPTSI.

In terms of assembly, interacts with LYN, ITPR1 and ITPR2. In terms of processing, phosphorylated on tyrosines upon BCR activation. In terms of tissue distribution, expressed in B-cell but not T-cell or myeloid cell lines. Highest expression in CD19(+) B-cells, with very low expression in other cell populations.

In terms of biological role, involved in B-cell receptor (BCR)-induced Ca(2+) mobilization from intracellular stores. Promotes Lyn-mediated phosphorylation of IP3 receptors 1 and 2. This chain is B-cell scaffold protein with ankyrin repeats (BANK1), found in Homo sapiens (Human).